The following is a 150-amino-acid chain: Viral late gene transcription factor 2 (150 aa).

The protein belongs to the orthopoxvirus VLTF-2/OPG126 family. Interacts with itself. Interacts with the late transcription factors VLTF-1/OPG093.

Acts with RNA polymerase to initiate transcription from late gene promoters. The sequence is that of Viral late gene transcription factor 2 (OPG126) from Vaccinia virus (strain Western Reserve) (VACV).